A 174-amino-acid polypeptide reads, in one-letter code: Ribosome maturation factor RimM (174 aa).

Residues 97–173 (GNKFYFHEVI…DLPVGLVEMY (77 aa)) form the PRC barrel domain.

The protein belongs to the RimM family. In terms of assembly, binds ribosomal protein uS19.

It localises to the cytoplasm. Its function is as follows. An accessory protein needed during the final step in the assembly of 30S ribosomal subunit, possibly for assembly of the head region. Essential for efficient processing of 16S rRNA. May be needed both before and after RbfA during the maturation of 16S rRNA. It has affinity for free ribosomal 30S subunits but not for 70S ribosomes. The chain is Ribosome maturation factor RimM from Flavobacterium johnsoniae (strain ATCC 17061 / DSM 2064 / JCM 8514 / BCRC 14874 / CCUG 350202 / NBRC 14942 / NCIMB 11054 / UW101) (Cytophaga johnsonae).